The sequence spans 1551 residues: MERRLRALEQLARGEAGGCPGLDGLLDLLLALHHELSSGPLRRERSVAQFLSWASPFVSKVKELRLQRDDFEILKVIGRGAFGEVTVVRQRDTGQIFAMKMLHKWEMLKRAETACFREERDVLVKGDSRWVTTLHYAFQDEEYLYLVMDYYAGGDLLTLLSRFEDRLPPELAQFYLAEMVLAIHSLHQLGYVHRDVKPDNVLLDVNGHIRLADFGSCLRLNTNGMVDSSVAVGTPDYISPEILQAMEEGKGHYGPQCDWWSLGVCAYELLFGETPFYAESLVETYGKIMNHEDHLQFPPDVPDVPASAQDLIRQLLCRQEERLGRGGLDDFRNHPFFEGVDWERLASSTAPYIPELRGPMDTSNFDVDDDTLNHPGTLPPPSHGAFSGHHLPFVGFTYTSGSHSPESSSEAWAALERKLQCLEQEKVELSRKHQEALHAPTDHRELEQLRKEVQTLRDRLPEMLRDKASLSQTDGPPAGSPGQDSDLRQELDRLHRELAEGRAGLQAQEQELCRAQGQQEELLQRLQEAQEREAATASQTRALSSQLEEARAAQRELEAQVSSLSRQVTQLQGQWEQRLEESSQAKTIHTASETNGMGPPEGGPQEAQLRKEVAALREQLEQAHSHRPSGKEEALCQLQEENRRLSREQERLEAELAQEQESKQRLEGERRETESNWEAQLADILSWVNDEKVSRGYLQALATKMAEELESLRNVGTQTLPARPLDHQWKARRLQKMEASARLELQSALEAEIRAKQGLQERLTQVQEAQLQAERRLQEAEKQSQALQQELAMLREELRARGPVDTKPSNSLIPFLSFRSSEKDSAKDPGISGEATRHGGEPDLRPEGRRSLRMGAVFPRAPTANTASTEGLPAKPGSHTLRPRSFPSPTKCLRCTSLMLGLGRQGLGCDACGYFCHTTCAPQAPPCPVPPDLLRTALGVHPETGTGTAYEGFLSVPRPSGVRRGWQRVFAALSDSRLLLFDAPDLRLSPPSGALLQVLDLRDPQFSATPVLASDVIHAQSRDLPRIFRVTTSQLAVPPTTCTVLLLAESEGERERWLQVLGELQRLLLDARPRPRPVYTLKEAYDNGLPLLPHTLCAAILDQDRLALGTEEGLFVIHLRSNDIFQVGECRRVQQLTLSPSAGLLVVLCGRGPSVRLFALAELENIEVAGAKIPESRGCQVLAAGSILQARTPVLCVAVKRQVLCYQLGPGPGPWQRRIRELQAPATVQSLGLLGDRLCVGAAGGFALYPLLNEAAPLALGAGLVPEELPPSRGGLGEALGAVELSLSEFLLLFTTAGIYVDGAGRKSRGHELLWPAAPMGWGYAAPYLTVFSENSIDVFDVRRAEWVQTVPLKKVRPLNPEGSLFLYGTEKVRLTYLRNQLAEKDEFDIPDLTDNSRRQLFRTKSKRRFFFRVSEEQQKQQRREMLKDPFVRSKLISPPTNFNHLVHVGPANGRPGARDKSPAPEEKGRVARGSGPQRPHSFSEALRRPASMGSEGLGGDADPMKRKPWTSLSSESVSCPQGSLSPATSLMQVSERPRSLPLSPELESSP.

Positions 71-337 (FEILKVIGRG…LDDFRNHPFF (267 aa)) constitute a Protein kinase domain. Residues 77-85 (IGRGAFGEV) and lysine 100 each bind ATP. Aspartate 195 (proton acceptor) is an active-site residue. Phosphoserine; by autocatalysis is present on residues serine 216 and serine 228. Threonine 234 is modified (phosphothreonine; by autocatalysis). The AGC-kinase C-terminal domain occupies 338–408 (EGVDWERLAS…TSGSHSPESS (71 aa)). Coiled coils occupy residues 406-678 (ESSS…SNWE) and 730-802 (KARR…RARG). 4 disordered regions span residues 467 to 486 (KASL…QDSD), 655 to 675 (ELAQ…ETES), 801 to 849 (RGPV…PEGR), and 863 to 886 (TANT…PRSF). A compositionally biased stretch (basic and acidic residues) spans 655-674 (ELAQEQESKQRLEGERRETE). Residues 835-849 (ATRHGGEPDLRPEGR) show a composition bias toward basic and acidic residues. The segment at 878 to 927 (SHTLRPRSFPSPTKCLRCTSLMLGLGRQGLGCDACGYFCHTTCAPQAPPC) adopts a Phorbol-ester/DAG-type zinc-finger fold. Positions 947–1066 (GTAYEGFLSV…WLQVLGELQR (120 aa)) constitute a PH domain. The region spanning 1092–1366 (LPHTLCAAIL…RPLNPEGSLF (275 aa)) is the CNH domain. The CRIB domain occupies 1437–1450 (ISPPTNFNHLVHVG). The tract at residues 1442 to 1551 (NFNHLVHVGP…PLSPELESSP (110 aa)) is disordered. The segment covering 1457 to 1470 (GARDKSPAPEEKGR) has biased composition (basic and acidic residues). Serine 1482 is subject to Phosphoserine. The segment covering 1511-1533 (TSLSSESVSCPQGSLSPATSLMQ) has biased composition (polar residues). Positions 1540 to 1551 (SLPLSPELESSP) are enriched in low complexity.

Belongs to the protein kinase superfamily. AGC Ser/Thr protein kinase family. DMPK subfamily. As to quaternary structure, homodimer and homotetramer via the coiled coil regions. Interacts tightly with GTP-bound but not GDP-bound CDC42. Mg(2+) is required as a cofactor. Expressed in heart and skeletal muscle.

The protein resides in the cytoplasm. It carries out the reaction L-seryl-[protein] + ATP = O-phospho-L-seryl-[protein] + ADP + H(+). It catalyses the reaction L-threonyl-[protein] + ATP = O-phospho-L-threonyl-[protein] + ADP + H(+). Its activity is regulated as follows. Maintained in an inactive, closed conformation by an interaction between the kinase domain and the negative autoregulatory C-terminal coiled-coil region. Agonist binding to the phorbol ester binding site disrupts this, releasing the kinase domain to allow N-terminus-mediated dimerization and kinase activation by transautophosphorylation. Functionally, may act as a downstream effector of CDC42 in cytoskeletal reorganization. Contributes to the actomyosin contractility required for cell invasion, through the regulation of MYPT1 and thus MLC2 phosphorylation. The chain is Serine/threonine-protein kinase MRCK gamma from Homo sapiens (Human).